The chain runs to 545 residues: MMGHRPVLVLSQNTKRESGRKVQSGNINAAKTIADIIRTCLGPKSMMKMLLDPMGGIVMTNDGNAILREIQVQHPAAKSMIEISRTQDEEVGDGTTSVIILAGEMLSVAEHFLEQQMHPTVVISAYRKALDDMISTLKKISIPVDISDSDMMLNIINSSITTKAISRWSSLACNIALDAVKMVQFEENGRKEIDIKKYARVEKIPGGIIEDSCVLRGVMINKDVTHPRMRRYIKNPRIVLLDSSLEYKKGESQTDIEITREEDFTRILQMEEEYIQQLCEDIIQLKPDVVITEKGISDLAQHYLMRANITAIRRVRKTDNNRIARACGARIVSRPEELREDDVGTGAGLLEIKKIGDEYFTFITDCKDPKACTILLRGASKEILSEVERNLQDAMQVCRNVLLDPQLVPGGGASEMAVAHALTEKSKAMTGVEQWPYRAVAQALEVIPRTLIQNCGASTIRLLTSLRAKHTQENCETWGVNGETGTLVDMKELGIWEPLAVKLQTYKTAVETAVLLLRIDDIVSGHKKKGDDQSRQGGAPDAGQE.

Residue Met1 is modified to N-acetylmethionine. The segment at 1–24 is disordered; the sequence is MMGHRPVLVLSQNTKRESGRKVQS. Ser11 is subject to Phosphoserine. A Glycyl lysine isopeptide (Lys-Gly) (interchain with G-Cter in SUMO2) cross-link involves residue Lys15. Gly42 is a binding site for ADP. Gly42 provides a ligand contact to ATP. Asp93 serves as a coordination point for Mg(2+). The ADP site is built by Gly94, Thr95, Thr96, Ser97, Thr162, and Lys163. Residues Gly94, Thr95, and Thr96 each contribute to the ATP site. The residue at position 170 (Ser170) is a Phosphoserine. Lys222 carries the N6-acetyllysine modification. Residues Ser243 and Ser244 each carry the phosphoserine modification. At Tyr247 the chain carries Phosphotyrosine. Residues Lys248 and Lys249 each participate in a glycyl lysine isopeptide (Lys-Gly) (interchain with G-Cter in SUMO2) cross-link. The residue at position 252 (Ser252) is a Phosphoserine. Cys366 and Cys372 are joined by a disulfide. Residue Lys381 forms a Glycyl lysine isopeptide (Lys-Gly) (interchain with G-Cter in SUMO2) linkage. Residue Gly411 participates in ADP binding. Gly411 contacts ATP. Thr430 and Thr459 each carry phosphothreonine. ADP-binding residues include Gly482, Glu483, Glu497, and Lys502. Position 482 (Gly482) interacts with ATP. Glu497 contributes to the ATP binding site. The segment at 526–545 is disordered; that stretch reads HKKKGDDQSRQGGAPDAGQE.

The protein belongs to the TCP-1 chaperonin family. Component of the chaperonin-containing T-complex (TRiC), a hexadecamer composed of two identical back-to-back stacked rings enclosing a protein folding chamber. Each ring is made up of eight different subunits: TCP1/CCT1, CCT2, CCT3, CCT4, CCT5, CCT6A/CCT6, CCT7, CCT8. Interacts with PACRG. Interacts with DNAAF4. Interacts with DLEC1.

The protein localises to the cytoplasm. The enzyme catalyses ATP + H2O = ADP + phosphate + H(+). Its function is as follows. Component of the chaperonin-containing T-complex (TRiC), a molecular chaperone complex that assists the folding of actin, tubulin and other proteins upon ATP hydrolysis. The TRiC complex mediates the folding of WRAP53/TCAB1, thereby regulating telomere maintenance. As part of the TRiC complex may play a role in the assembly of BBSome, a complex involved in ciliogenesis regulating transports vesicles to the cilia. This Homo sapiens (Human) protein is T-complex protein 1 subunit gamma (CCT3).